The sequence spans 408 residues: Putative odorant receptor 92a (408 aa).

Residues 1–52 (MLFRKRKPKSDDEVITFDELTRFPMTFYKTIGEDLYSDRDPNVIRRYLLRFY) lie on the Cytoplasmic side of the membrane. A helical transmembrane segment spans residues 53 to 73 (LVLGFLNFNAYVVGEIAYFIV). A topological domain (extracellular) is located at residue histidine 74. Residues 75–95 (IMSTTTLLEATAVAPCIGFSF) traverse the membrane as a helical segment. Residues 96–144 (MADFKQFGLTVNRKRLVRLLDDLKEIFPLDLEAQRKYNVSFYRKHMNRV) lie on the Cytoplasmic side of the membrane. A helical membrane pass occupies residues 145-165 (MTLFTILCMTYTSSFSFYPAI). Topologically, residues 166-209 (KSTIKYYLMGSEIFERNYGFHILFPYDAETDLTVYWFSYWGLAH) are extracellular. Residues 210–230 (CAYVAGVSYVCVDLLLIATIT) form a helical membrane-spanning segment. Over 231 to 276 (QLTMHFNFIANDLEAYEGGDHTDEENIKYLHNLVVYHARALDLSEE) the chain is Cytoplasmic. Residues 277–301 (VNNIFSFLILWNFIAASLVICFAGF) traverse the membrane as a helical segment. The Extracellular segment spans residues 302-310 (QITASNVED). A helical transmembrane segment spans residues 311-331 (IVLYFIFFSASLVQVFVVCYY). Residues 332 to 378 (GDEMISSSSRIGHSAFNQNWLPCSTKYKRILQFIIARSQKPASIRPP) lie on the Cytoplasmic side of the membrane. Residues 379 to 399 (TFPPISFNTFMKVISMSYQFF) traverse the membrane as a helical segment. The Extracellular portion of the chain corresponds to 400–408 (ALLRTTYYG).

The protein belongs to the insect chemoreceptor superfamily. Heteromeric odorant receptor channel (TC 1.A.69) family. Or49a subfamily. As to quaternary structure, interacts with Orco. Complexes exist early in the endomembrane system in olfactory sensory neurons (OSNs), coupling these complexes to the conserved ciliary trafficking pathway.

The protein resides in the cell membrane. In terms of biological role, odorant receptor which mediates acceptance or avoidance behavior, depending on its substrates. The odorant receptor repertoire encodes a large collection of odor stimuli that vary widely in identity, intensity, and duration. May form a complex with Orco to form odorant-sensing units, providing sensitive and prolonged odorant signaling and calcium permeability. The polypeptide is Putative odorant receptor 92a (Or92a) (Drosophila melanogaster (Fruit fly)).